The following is a 145-amino-acid chain: Protein BUD31 homolog 1 (145 aa).

Belongs to the BUD31 (G10) family.

Its subcellular location is the nucleus. The sequence is that of Protein BUD31 homolog 1 from Oryza sativa subsp. japonica (Rice).